The sequence spans 188 residues: HTH-type transcriptional regulator Mb3439c (188 aa).

An HTH tetR-type domain is found at 17–77 (EEVAAAILQA…AVLDHLGTKL (61 aa)). The H-T-H motif DNA-binding region spans 40-59 (SIRDIAARSKVNHGLVFRHF).

Its function is as follows. Negatively regulates the expression of sulfate ester dioxygenase Mb3440 and its own expression. The protein is HTH-type transcriptional regulator Mb3439c of Mycobacterium bovis (strain ATCC BAA-935 / AF2122/97).